A 91-amino-acid chain; its full sequence is uncharacterized protein (91 aa).

3 helical membrane-spanning segments follow: residues Ala6 to Phe26, Met37 to Ile57, and Ile68 to Leu88.

The protein localises to the cell membrane. This is an uncharacterized protein from Bacillus subtilis (strain 168).